Here is a 236-residue protein sequence, read N- to C-terminus: Uridylate kinase (236 aa).

10–13 (KLSG) contacts ATP. G52 contacts UMP. The ATP site is built by G53 and R57. UMP is bound by residues D72 and 133–140 (TGNPFFTT). ATP-binding residues include T160, Y166, and D169.

The protein belongs to the UMP kinase family. As to quaternary structure, homohexamer.

The protein resides in the cytoplasm. It carries out the reaction UMP + ATP = UDP + ADP. It participates in pyrimidine metabolism; CTP biosynthesis via de novo pathway; UDP from UMP (UMPK route): step 1/1. With respect to regulation, inhibited by UTP. Catalyzes the reversible phosphorylation of UMP to UDP. The polypeptide is Uridylate kinase (Bacteroides thetaiotaomicron (strain ATCC 29148 / DSM 2079 / JCM 5827 / CCUG 10774 / NCTC 10582 / VPI-5482 / E50)).